We begin with the raw amino-acid sequence, 257 residues long: Imidazole glycerol phosphate synthase subunit HisF (257 aa).

Residues D11 and D130 contribute to the active site.

Belongs to the HisA/HisF family. As to quaternary structure, heterodimer of HisH and HisF.

It is found in the cytoplasm. The catalysed reaction is 5-[(5-phospho-1-deoxy-D-ribulos-1-ylimino)methylamino]-1-(5-phospho-beta-D-ribosyl)imidazole-4-carboxamide + L-glutamine = D-erythro-1-(imidazol-4-yl)glycerol 3-phosphate + 5-amino-1-(5-phospho-beta-D-ribosyl)imidazole-4-carboxamide + L-glutamate + H(+). It functions in the pathway amino-acid biosynthesis; L-histidine biosynthesis; L-histidine from 5-phospho-alpha-D-ribose 1-diphosphate: step 5/9. Its function is as follows. IGPS catalyzes the conversion of PRFAR and glutamine to IGP, AICAR and glutamate. The HisF subunit catalyzes the cyclization activity that produces IGP and AICAR from PRFAR using the ammonia provided by the HisH subunit. The sequence is that of Imidazole glycerol phosphate synthase subunit HisF from Shewanella baltica (strain OS223).